Consider the following 241-residue polypeptide: Beta-nerve growth factor (241 aa).

The first 18 residues, 1-18 (MSMLFYTLITAFLIGIQA), serve as a signal peptide directing secretion. A propeptide spanning residues 19–121 (EPHSESNVPA…PFNRTHRSKR (103 aa)) is cleaved from the precursor. Residues Asn-69 and Asn-114 are each glycosylated (N-linked (GlcNAc...) asparagine). 3 disulfides stabilise this stretch: Cys-136–Cys-201, Cys-179–Cys-229, and Cys-189–Cys-231. The a 1-acyl-sn-glycero-3-phospho-(1D-myo-inositol) site is built by Tyr-173 and Lys-209. Lys-209 contributes to the a 1-acyl-sn-glycero-3-phospho-L-serine binding site.

The protein belongs to the NGF-beta family. Homodimer. The homodimer interacts with a single NTRK1 chain. The homodimer interacts with a single NGFR chain. The NGF dimer interacts with a single SORCS2 chain (via extracellular domain). The NGF precursor (proNGF) binds to a receptor complex formed by SORT1 and NGFR, which leads to NGF endocytosis. Both mature NGF and the immature NGF precursor (proNGF) interact with SORCS2 and with the heterodimer formed by SORCS2 and NGFR (via extracellular domains). The NGF precursor (proNGF) has much higher affinity for SORCS2 than mature NGF. The NGF precursor (proNGF) has much higher affinity for SORT1 than mature NGF. Interacts with ADAM10 in a divalent cation-dependent manner. Interaction with SORCS3.

It localises to the secreted. The protein localises to the endosome lumen. Functionally, nerve growth factor is important for the development and maintenance of the sympathetic and sensory nervous systems. Extracellular ligand for the NTRK1 and NGFR receptors, activates cellular signaling cascades to regulate neuronal proliferation, differentiation and survival. The immature NGF precursor (proNGF) functions as a ligand for the heterodimeric receptor formed by SORCS2 and NGFR, and activates cellular signaling cascades that lead to inactivation of RAC1 and/or RAC2, reorganization of the actin cytoskeleton and neuronal growth cone collapse. In contrast to mature NGF, the precursor form (proNGF) promotes neuronal apoptosis (in vitro). Inhibits metalloproteinase-dependent proteolysis of platelet glycoprotein VI. Binds lysophosphatidylinositol and lysophosphatidylserine between the two chains of the homodimer. The lipid-bound form promotes histamine relase from mast cells, contrary to the lipid-free form. The polypeptide is Beta-nerve growth factor (NGF) (Homo sapiens (Human)).